A 216-amino-acid polypeptide reads, in one-letter code: Octanoyltransferase (216 aa).

Residues 32–207 (ENSPDELWLV…TFSQLLGYEH (176 aa)) enclose the BPL/LPL catalytic domain. Residues 71–78 (RGGQVTYH), 138–140 (SLG), and 151–153 (GLA) contribute to the substrate site. Residue Cys169 is the Acyl-thioester intermediate of the active site.

It belongs to the LipB family.

Its subcellular location is the cytoplasm. The catalysed reaction is octanoyl-[ACP] + L-lysyl-[protein] = N(6)-octanoyl-L-lysyl-[protein] + holo-[ACP] + H(+). Its pathway is protein modification; protein lipoylation via endogenous pathway; protein N(6)-(lipoyl)lysine from octanoyl-[acyl-carrier-protein]: step 1/2. Functionally, catalyzes the transfer of endogenously produced octanoic acid from octanoyl-acyl-carrier-protein onto the lipoyl domains of lipoate-dependent enzymes. Lipoyl-ACP can also act as a substrate although octanoyl-ACP is likely to be the physiological substrate. The sequence is that of Octanoyltransferase from Shewanella amazonensis (strain ATCC BAA-1098 / SB2B).